Here is a 252-residue protein sequence, read N- to C-terminus: Outer membrane protein P1 (252 aa).

The first 23 residues, 1 to 23 (METTTKLAIGVSALCCLASAAFA), serve as a signal peptide directing secretion.

It belongs to the Coxiella porin P1 (CPP1) (TC 1.B.43) family. In terms of assembly, may form trimers.

It is found in the cell outer membrane. Able to form a pore in lipid bilayers. In Coxiella burnetii (strain RSA 493 / Nine Mile phase I), this protein is Outer membrane protein P1 (ompP1).